The sequence spans 462 residues: L-seryl-tRNA(Sec) selenium transferase (462 aa).

K294 is subject to N6-(pyridoxal phosphate)lysine.

Belongs to the SelA family. As to quaternary structure, homodecamer; pentamer of dimers. Binds only one seryl-tRNA(Sec) per dimer. It depends on pyridoxal 5'-phosphate as a cofactor.

The protein localises to the cytoplasm. The catalysed reaction is L-seryl-tRNA(Sec) + selenophosphate + H(+) = L-selenocysteinyl-tRNA(Sec) + phosphate. The protein operates within aminoacyl-tRNA biosynthesis; selenocysteinyl-tRNA(Sec) biosynthesis; selenocysteinyl-tRNA(Sec) from L-seryl-tRNA(Sec) (bacterial route): step 1/1. Functionally, converts seryl-tRNA(Sec) to selenocysteinyl-tRNA(Sec) required for selenoprotein biosynthesis. The polypeptide is L-seryl-tRNA(Sec) selenium transferase (Yersinia enterocolitica serotype O:8 / biotype 1B (strain NCTC 13174 / 8081)).